Here is a 470-residue protein sequence, read N- to C-terminus: Negative regulator of sexual conjugation and meiosis (470 aa).

Residues 18-295 (LRFVSIIGAG…ITLPELSTLV (278 aa)) form the Protein kinase domain. ATP is bound by residues 24 to 32 (IGAGAYGVV) and Lys47. Asp143 (proton acceptor) is an active-site residue. The residue at position 469 (Ser469) is a Phosphoserine.

It belongs to the protein kinase superfamily. Ser/Thr protein kinase family.

The catalysed reaction is L-seryl-[protein] + ATP = O-phospho-L-seryl-[protein] + ADP + H(+). It carries out the reaction L-threonyl-[protein] + ATP = O-phospho-L-threonyl-[protein] + ADP + H(+). Functionally, this protein is a negative regulator of both sexual conjugation and meiosis. It phosphorylates mei2. It blocks the onset of meiosis until conjugation takes place. In Schizosaccharomyces pombe (strain 972 / ATCC 24843) (Fission yeast), this protein is Negative regulator of sexual conjugation and meiosis (ran1).